The following is a 431-amino-acid chain: Histidinol dehydrogenase (431 aa).

3 residues coordinate NAD(+): tyrosine 129, glutamine 191, and asparagine 214. Residues serine 237, glutamine 259, and histidine 262 each contribute to the substrate site. 2 residues coordinate Zn(2+): glutamine 259 and histidine 262. Residues glutamate 327 and histidine 328 each act as proton acceptor in the active site. Positions 328, 361, 415, and 420 each coordinate substrate. Aspartate 361 contacts Zn(2+). Residue histidine 420 coordinates Zn(2+).

This sequence belongs to the histidinol dehydrogenase family. The cofactor is Zn(2+).

The enzyme catalyses L-histidinol + 2 NAD(+) + H2O = L-histidine + 2 NADH + 3 H(+). Its pathway is amino-acid biosynthesis; L-histidine biosynthesis; L-histidine from 5-phospho-alpha-D-ribose 1-diphosphate: step 9/9. Its function is as follows. Catalyzes the sequential NAD-dependent oxidations of L-histidinol to L-histidinaldehyde and then to L-histidine. In Lactococcus lactis subsp. lactis (strain IL1403) (Streptococcus lactis), this protein is Histidinol dehydrogenase (hisD).